We begin with the raw amino-acid sequence, 435 residues long: Serine--tRNA ligase (435 aa).

Threonine 241–glutamate 243 is an L-serine binding site. Arginine 272–glutamate 274 contributes to the ATP binding site. Position 295 (glutamate 295) interacts with L-serine. Residue glutamate 359–serine 362 coordinates ATP. L-serine is bound at residue serine 395.

It belongs to the class-II aminoacyl-tRNA synthetase family. Type-1 seryl-tRNA synthetase subfamily. As to quaternary structure, homodimer. The tRNA molecule binds across the dimer.

It localises to the cytoplasm. It catalyses the reaction tRNA(Ser) + L-serine + ATP = L-seryl-tRNA(Ser) + AMP + diphosphate + H(+). It carries out the reaction tRNA(Sec) + L-serine + ATP = L-seryl-tRNA(Sec) + AMP + diphosphate + H(+). It participates in aminoacyl-tRNA biosynthesis; selenocysteinyl-tRNA(Sec) biosynthesis; L-seryl-tRNA(Sec) from L-serine and tRNA(Sec): step 1/1. In terms of biological role, catalyzes the attachment of serine to tRNA(Ser). Is also able to aminoacylate tRNA(Sec) with serine, to form the misacylated tRNA L-seryl-tRNA(Sec), which will be further converted into selenocysteinyl-tRNA(Sec). This Actinobacillus pleuropneumoniae serotype 5b (strain L20) protein is Serine--tRNA ligase.